The sequence spans 232 residues: Large ribosomal subunit protein uL1 (232 aa).

The protein belongs to the universal ribosomal protein uL1 family. Part of the 50S ribosomal subunit.

Its function is as follows. Binds directly to 23S rRNA. The L1 stalk is quite mobile in the ribosome, and is involved in E site tRNA release. Functionally, protein L1 is also a translational repressor protein, it controls the translation of the L11 operon by binding to its mRNA. The polypeptide is Large ribosomal subunit protein uL1 (Burkholderia ambifaria (strain MC40-6)).